Reading from the N-terminus, the 224-residue chain is UPF0758 protein Sde_3678 (224 aa).

The region spanning 102 to 224 (SLTSTTAVKQ…AVSFAERGWI (123 aa)) is the MPN domain. Residues histidine 173, histidine 175, and aspartate 186 each coordinate Zn(2+). The JAMM motif signature appears at 173 to 186 (HNHPSGIAEPSEPD).

The protein belongs to the UPF0758 family.

This Saccharophagus degradans (strain 2-40 / ATCC 43961 / DSM 17024) protein is UPF0758 protein Sde_3678.